Reading from the N-terminus, the 588-residue chain is Methylcrotonoyl-CoA carboxylase beta chain, mitochondrial (588 aa).

Residues 72-329 (MNSTLKQLKE…KKQPSPVITE (258 aa)) enclose the CoA carboxyltransferase N-terminal domain. Residues 72–570 (MNSTLKQLKE…RKVIALSLSA (499 aa)) are carboxyltransferase. Residues 329–570 (ETEEPLYPTS…RKVIALSLSA (242 aa)) enclose the CoA carboxyltransferase C-terminal domain. Residues 366-395 (RFDEFKELYGTTLICGFARVHGMPVGIIAN) form an acyl-CoA binding region.

It belongs to the AccD/PCCB family. As to quaternary structure, probably a dodecamer composed of six biotin-containing alpha subunits and six beta subunits.

The protein localises to the mitochondrion matrix. It catalyses the reaction 3-methylbut-2-enoyl-CoA + hydrogencarbonate + ATP = 3-methyl-(2E)-glutaconyl-CoA + ADP + phosphate + H(+). The protein operates within amino-acid degradation; L-leucine degradation; (S)-3-hydroxy-3-methylglutaryl-CoA from 3-isovaleryl-CoA: step 2/3. Functionally, carboxyltransferase subunit of the 3-methylcrotonyl-CoA carboxylase, an enzyme that catalyzes the conversion of 3-methylcrotonyl-CoA to 3-methylglutaconyl-CoA, a critical step for leucine and isovaleric acid catabolism. This is Methylcrotonoyl-CoA carboxylase beta chain, mitochondrial (mccb) from Dictyostelium discoideum (Social amoeba).